The following is an 807-amino-acid chain: Histone transcription regulator slm9 (807 aa).

2 WD repeats span residues serine 62 to glutamine 100 and leucine 102 to valine 140. Positions glutamate 144–glutamate 164 are disordered. WD repeat units lie at residues glycine 182–serine 221, proline 230–asparagine 273, glycine 276–valine 322, and leucine 326–aspartate 367. The disordered stretch occupies residues asparagine 388–arginine 437. Residues arginine 395–lysine 409 show a composition bias toward polar residues. Phosphoserine occurs at positions 406, 421, and 422. Positions lysine 426–valine 435 are enriched in basic residues. WD repeat units lie at residues aspartate 492–serine 526 and alanine 528–serine 574.

Belongs to the WD repeat HIR1 family. As to quaternary structure, interacts with hip1 and hip3.

It is found in the cytoplasm. It localises to the nucleus. In terms of biological role, probably required for replication-independent chromatin assembly. Required for transcriptional silencing in the outer repeat (otr) centromeric repeats and the Tf2 long terminal repeat retrotransposons. May play an indirect role in the regulation of cdc2 and/or wee1 at the G2/M stage of mitosis. The sequence is that of Histone transcription regulator slm9 (slm9) from Schizosaccharomyces pombe (strain 972 / ATCC 24843) (Fission yeast).